Here is a 738-residue protein sequence, read N- to C-terminus: NAD(P)H-quinone oxidoreductase subunit 5, chloroplastic (738 aa).

A run of 17 helical transmembrane segments spans residues 9-29, 39-59, 89-109, 125-145, 147-167, 185-205, 219-239, 258-278, 280-300, 327-347, 354-374, 396-416, 425-445, 542-562, 610-630, 691-711, and 717-737; these read WVIPLLPLPVIMSMGFGLFLI, IWAFPSILLLSIAMVFSLHLS, VDPLTSIMLILITTVGILVLI, FVYISFFNTSMLGLVTSSNLI, IYFFWELVGMCSYLLIGFWFT, GDFGLLLGILGFFWITGSLEF, NGINSLLTTLCAFLLFLGAVA, TPISALIHAATMVAAGIFLLA, LLPLFISLPLLMSFISLVGTI, LGYMMLALGIGSYQAALFHLI, ALLFLGSGSVIHSMEPLVGYS, TTFLCGTLSLCGIPPLACFWS, WLYSPFFGIIASFTAGLTAFY, LFPLLILLLFTLFIGSIGIPF, SLAIFGLFIAYIFYGSAYSFF, GVIDGIINGVGLAGFCIGEEI, and GRISSYLFFFLCYVSLFLFFI.

It belongs to the complex I subunit 5 family. NDH is composed of at least 16 different subunits, 5 of which are encoded in the nucleus.

Its subcellular location is the plastid. The protein resides in the chloroplast thylakoid membrane. It carries out the reaction a plastoquinone + NADH + (n+1) H(+)(in) = a plastoquinol + NAD(+) + n H(+)(out). It catalyses the reaction a plastoquinone + NADPH + (n+1) H(+)(in) = a plastoquinol + NADP(+) + n H(+)(out). Its function is as follows. NDH shuttles electrons from NAD(P)H:plastoquinone, via FMN and iron-sulfur (Fe-S) centers, to quinones in the photosynthetic chain and possibly in a chloroplast respiratory chain. The immediate electron acceptor for the enzyme in this species is believed to be plastoquinone. Couples the redox reaction to proton translocation, and thus conserves the redox energy in a proton gradient. The chain is NAD(P)H-quinone oxidoreductase subunit 5, chloroplastic (ndhF) from Saccharum officinarum (Sugarcane).